The primary structure comprises 455 residues: MSKENNYHHLAQKILELCGGKSNISSYTHCMTRLRITPYDESKADAQALRKLDGVLGVVEAETLQIILGTGVVNHVTAAFSKLVSAEEGADVKEAAAKKKADINRKNATPFKLFLRKIASIFIPLIPALVASGLITGITKAIIQAGWLSADSQIAIILTVIGSGLFTYLGILVGINASKEFGGTPALGALAGILIINPEIAKISLFGEELLPGRGGLIGVLFAAIFIAYTEQFIRRFIPQSLDIIVTPTVSLLITGIVTYVVFMPLGGFISDAITSGLLSILDIGGIAAGFILGATFLPLVVTGLHQGLTPVHMELINSIGNDPLLPILAMGGAGQVGAAFAVFVKTKKTTLRKAIAGGLPSGLLGIGEPLIFGVTLPLGRPFLTACLGAGIGGAFQAYFQVATIAIGVSGLPLSFLVLPSQIILYIVGLFISYAAGFLLTYAFGYKDEMASQFD.

The 83-residue stretch at 8–90 folds into the PTS EIIB type-1 domain; that stretch reads HHLAQKILEL…SKLVSAEEGA (83 aa). The Phosphocysteine intermediate; for EIIB activity role is filled by Cys-30. The PTS EIIC type-1 domain maps to 116-455; the sequence is RKIASIFIPL…YKDEMASQFD (340 aa). A run of 10 helical transmembrane segments spans residues 118-138, 154-174, 181-201, 210-230, 250-270, 281-301, 325-345, 355-375, 399-419, and 423-443; these read IASIFIPLIPALVASGLITGI, IAIILTVIGSGLFTYLGILVG, FGGTPALGALAGILIINPEIA, LLPGRGGLIGVLFAAIFIAYT, VSLLITGIVTYVVFMPLGGFI, ILDIGGIAAGFILGATFLPLV, LLPILAMGGAGQVGAAFAVFV, AIAGGLPSGLLGIGEPLIFGV, YFQVATIAIGVSGLPLSFLVL, and IILYIVGLFISYAAGFLLTYA.

The protein resides in the cell membrane. Functionally, the phosphoenolpyruvate-dependent sugar phosphotransferase system (sugar PTS), a major carbohydrate active -transport system, catalyzes the phosphorylation of incoming sugar substrates concomitantly with their translocation across the cell membrane. This chain is Putative PTS system EIIBC component YbbF (ybbF), found in Bacillus subtilis (strain 168).